The primary structure comprises 215 residues: uncharacterized protein (215 aa).

Residues glycine 53, glutamate 74, and aspartate 97 each contribute to the S-adenosyl-L-methionine site.

It belongs to the methyltransferase superfamily. YrrT family.

In terms of biological role, could be a S-adenosyl-L-methionine-dependent methyltransferase. This is an uncharacterized protein from Geobacillus kaustophilus (strain HTA426).